The following is a 209-amino-acid chain: Small ribosomal subunit protein uS3 (209 aa).

The KH type-2 domain maps to 38-107 (IRKVIKSKYA…RFIVNVEEIK (70 aa)).

This sequence belongs to the universal ribosomal protein uS3 family. Part of the 30S ribosomal subunit. Forms a tight complex with proteins S10 and S14.

Its function is as follows. Binds the lower part of the 30S subunit head. Binds mRNA in the 70S ribosome, positioning it for translation. This chain is Small ribosomal subunit protein uS3, found in Thermosipho melanesiensis (strain DSM 12029 / CIP 104789 / BI429).